The following is a 128-amino-acid chain: MNRALDDEVRRLLKIKNYMARKRVEFHRQEWFRYKKLGDAWRKPRGKHSKLREHLSRRPPIVDAGFRSPAKVRGMHPSGYYEVLVYNLKDIENIDPKIQAARIASSVGSRKREEIAKRCAELNIKVLN.

It belongs to the eukaryotic ribosomal protein eL32 family.

The sequence is that of Large ribosomal subunit protein eL32 (rpl32e) from Thermoplasma volcanium (strain ATCC 51530 / DSM 4299 / JCM 9571 / NBRC 15438 / GSS1).